We begin with the raw amino-acid sequence, 469 residues long: Glutamate--tRNA ligase (469 aa).

The short motif at 9–19 (PSPTGYLHVGG) is the 'HIGH' region element. Positions 98, 100, 125, and 127 each coordinate Zn(2+). Residues 237–241 (KLSKR) carry the 'KMSKS' region motif. K240 provides a ligand contact to ATP.

This sequence belongs to the class-I aminoacyl-tRNA synthetase family. Glutamate--tRNA ligase type 1 subfamily. Monomer. It depends on Zn(2+) as a cofactor.

The protein localises to the cytoplasm. It carries out the reaction tRNA(Glu) + L-glutamate + ATP = L-glutamyl-tRNA(Glu) + AMP + diphosphate. In terms of biological role, catalyzes the attachment of glutamate to tRNA(Glu) in a two-step reaction: glutamate is first activated by ATP to form Glu-AMP and then transferred to the acceptor end of tRNA(Glu). This chain is Glutamate--tRNA ligase, found in Serratia proteamaculans (strain 568).